Reading from the N-terminus, the 168-residue chain is Cytochrome c-type biogenesis protein CcmE (168 aa).

Topologically, residues 1–23 (MTTAPSGLPGTPLPPARRRERPR) are cytoplasmic. A helical; Signal-anchor for type II membrane protein transmembrane segment spans residues 24–44 (WPLLVAGAAVLGLIGYMVLGN). The Extracellular portion of the chain corresponds to 45–168 (ANSNLVYYVL…KILNDQSTKP (124 aa)). Positions 137 and 141 each coordinate heme. The segment at 145 to 168 (DSKGEGQYSQDDLKKILNDQSTKP) is disordered.

This sequence belongs to the CcmE/CycJ family.

It is found in the cell membrane. Heme chaperone required for the biogenesis of c-type cytochromes. Transiently binds heme delivered by CcmC and transfers the heme to apo-cytochromes in a process facilitated by CcmF and CcmH. The chain is Cytochrome c-type biogenesis protein CcmE from Deinococcus radiodurans (strain ATCC 13939 / DSM 20539 / JCM 16871 / CCUG 27074 / LMG 4051 / NBRC 15346 / NCIMB 9279 / VKM B-1422 / R1).